Here is a 220-residue protein sequence, read N- to C-terminus: U1 small nuclear ribonucleoprotein C (220 aa).

The segment at 4–36 (YYCDYCDIYLTHDSMNARKAHNSGRNHVANVRD) adopts a Matrin-type zinc-finger fold. 2 stretches are compositionally biased toward pro residues: residues 88–130 (PGPP…PFLP) and 147–165 (PPFP…PFRP). Residues 88–220 (PGPPPPGAFP…HPDRLRMLGQ (133 aa)) form a disordered region. The segment covering 166 to 200 (PMGMGMPPAPAQAQAQGSPMGMPQQGQQGTFTPTQ) has biased composition (low complexity). Residues 211-220 (HPDRLRMLGQ) are compositionally biased toward basic and acidic residues.

The protein belongs to the U1 small nuclear ribonucleoprotein C family. As to quaternary structure, U1 snRNP is composed of the 7 core Sm proteins B/B', D1, D2, D3, E, F and G that assemble in a heptameric protein ring on the Sm site of the small nuclear RNA to form the core snRNP, and at least 3 U1 snRNP-specific proteins U1-70K, U1-A and U1-C. U1-C interacts with U1 snRNA and the 5' splice-site region of the pre-mRNA.

The protein resides in the nucleus. Component of the spliceosomal U1 snRNP, which is essential for recognition of the pre-mRNA 5' splice-site and the subsequent assembly of the spliceosome. U1-C is directly involved in initial 5' splice-site recognition for both constitutive and regulated alternative splicing. The interaction with the 5' splice-site seems to precede base-pairing between the pre-mRNA and the U1 snRNA. Stimulates commitment or early (E) complex formation by stabilizing the base pairing of the 5' end of the U1 snRNA and the 5' splice-site region. The protein is U1 small nuclear ribonucleoprotein C of Cryptococcus neoformans var. neoformans serotype D (strain JEC21 / ATCC MYA-565) (Filobasidiella neoformans).